We begin with the raw amino-acid sequence, 264 residues long: 4-hydroxy-tetrahydrodipicolinate reductase (264 aa).

NAD(+) is bound at residue 9–14 (GCSGRM). R36 contributes to the NADP(+) binding site. Residues 100–102 (GTT) and 121–124 (SANM) each bind NAD(+). H154 acts as the Proton donor/acceptor in catalysis. H155 provides a ligand contact to (S)-2,3,4,5-tetrahydrodipicolinate. K158 (proton donor) is an active-site residue. 164-165 (GT) is a binding site for (S)-2,3,4,5-tetrahydrodipicolinate.

This sequence belongs to the DapB family.

It localises to the cytoplasm. The catalysed reaction is (S)-2,3,4,5-tetrahydrodipicolinate + NAD(+) + H2O = (2S,4S)-4-hydroxy-2,3,4,5-tetrahydrodipicolinate + NADH + H(+). It carries out the reaction (S)-2,3,4,5-tetrahydrodipicolinate + NADP(+) + H2O = (2S,4S)-4-hydroxy-2,3,4,5-tetrahydrodipicolinate + NADPH + H(+). It participates in amino-acid biosynthesis; L-lysine biosynthesis via DAP pathway; (S)-tetrahydrodipicolinate from L-aspartate: step 4/4. Functionally, catalyzes the conversion of 4-hydroxy-tetrahydrodipicolinate (HTPA) to tetrahydrodipicolinate. This Wolbachia sp. subsp. Brugia malayi (strain TRS) protein is 4-hydroxy-tetrahydrodipicolinate reductase.